Reading from the N-terminus, the 463-residue chain is Argininosuccinate lyase (463 aa).

Belongs to the lyase 1 family. Argininosuccinate lyase subfamily.

It is found in the cytoplasm. The catalysed reaction is 2-(N(omega)-L-arginino)succinate = fumarate + L-arginine. It participates in amino-acid biosynthesis; L-arginine biosynthesis; L-arginine from L-ornithine and carbamoyl phosphate: step 3/3. The protein is Argininosuccinate lyase of Methylorubrum populi (strain ATCC BAA-705 / NCIMB 13946 / BJ001) (Methylobacterium populi).